Reading from the N-terminus, the 283-residue chain is Gap junction beta-1 protein (283 aa).

The Cytoplasmic portion of the chain corresponds to 1–22; that stretch reads MNWTGLYTLLSGVNRHSTAIGR. The helical transmembrane segment at 23-45 threads the bilayer; sequence VWLSVIFIFRIMVLVVAAESVWG. Topologically, residues 46–75 are extracellular; that stretch reads DEKSSFICNTLQPGCNSVCYDHFFPISHVR. A helical transmembrane segment spans residues 76–95; sequence LWSLQLILVSTPALLVAMHV. The Cytoplasmic portion of the chain corresponds to 96–130; that stretch reads AHQQHIEKKMLRLEGHGDPIHLEEVKRHKVHISGT. The chain crosses the membrane as a helical span at residues 131-153; sequence LWWTYVISVVFRLLFEAAFMYVF. At 154 to 191 the chain is on the extracellular side; that stretch reads YLLYPGYAMVRLVKCDAYPCPNTVDCFVSRPTEKTVFT. The helical transmembrane segment at 192-214 threads the bilayer; it reads VFMLAASGICIILNVAEVVYLIV. At 215-283 the chain is on the cytoplasmic side; the sequence is RACARRAQRR…AEKSDRCSAC (69 aa). Phosphoserine occurs at positions 233, 258, 266, and 277.

This sequence belongs to the connexin family. Beta-type (group I) subfamily. As to quaternary structure, a connexon is composed of a hexamer of connexins. Interacts with CNST.

It localises to the cell membrane. The protein resides in the cell junction. It is found in the gap junction. In terms of biological role, one gap junction consists of a cluster of closely packed pairs of transmembrane channels, the connexons, through which materials of low MW diffuse from one cell to a neighboring cell. The chain is Gap junction beta-1 protein (GJB1) from Equus caballus (Horse).